The chain runs to 430 residues: Tektin-2 (430 aa).

Coiled-coil stretches lie at residues 80–162 and 225–382; these read KCLT…FEQL and NKDR…CKAN.

It belongs to the tektin family. Microtubule inner protein component of sperm flagellar doublet microtubules. May interact with CCDC172. Post-translationally, tyrosine phosphorylated. Ubiquitinated, leading to its degradation. Deubiquitinated by USP16, promoting its stability. In terms of tissue distribution, expressed at high levels in testis, trachea and fetal lung, and at lower levels in ovary, pituitary, adult lung, fetal brain and fetal kidney.

It localises to the cytoplasm. It is found in the cytoskeleton. The protein resides in the cilium axoneme. The protein localises to the flagellum axoneme. Its subcellular location is the microtubule organizing center. Microtubule inner protein (MIP) part of the dynein-decorated doublet microtubules (DMTs) in cilia and flagellar axoneme. Plays a key role in the assembly or attachment of the inner dynein arm to microtubules in sperm flagella and tracheal cilia. Forms filamentous polymers in the walls of ciliary and flagellar microtubules. The polypeptide is Tektin-2 (Homo sapiens (Human)).